A 424-amino-acid polypeptide reads, in one-letter code: Exodeoxyribonuclease 7 large subunit (424 aa).

The protein belongs to the XseA family. Heterooligomer composed of large and small subunits.

The protein resides in the cytoplasm. The enzyme catalyses Exonucleolytic cleavage in either 5'- to 3'- or 3'- to 5'-direction to yield nucleoside 5'-phosphates.. Bidirectionally degrades single-stranded DNA into large acid-insoluble oligonucleotides, which are then degraded further into small acid-soluble oligonucleotides. This Cyanothece sp. (strain PCC 7425 / ATCC 29141) protein is Exodeoxyribonuclease 7 large subunit.